A 290-amino-acid chain; its full sequence is Ribosomal RNA small subunit methyltransferase A (290 aa).

S-adenosyl-L-methionine contacts are provided by N27, L29, G54, E75, D100, and N125.

Belongs to the class I-like SAM-binding methyltransferase superfamily. rRNA adenine N(6)-methyltransferase family. RsmA subfamily.

Its subcellular location is the cytoplasm. The enzyme catalyses adenosine(1518)/adenosine(1519) in 16S rRNA + 4 S-adenosyl-L-methionine = N(6)-dimethyladenosine(1518)/N(6)-dimethyladenosine(1519) in 16S rRNA + 4 S-adenosyl-L-homocysteine + 4 H(+). Its function is as follows. Specifically dimethylates two adjacent adenosines (A1518 and A1519) in the loop of a conserved hairpin near the 3'-end of 16S rRNA in the 30S particle. May play a critical role in biogenesis of 30S subunits. The protein is Ribosomal RNA small subunit methyltransferase A of Streptococcus pyogenes serotype M3 (strain ATCC BAA-595 / MGAS315).